The following is a 136-amino-acid chain: Ribosome-binding factor A (136 aa).

Residues 1–22 (MNTAGPAGKLAGHAASGPTQRQ) are disordered.

It belongs to the RbfA family. In terms of assembly, monomer. Binds 30S ribosomal subunits, but not 50S ribosomal subunits or 70S ribosomes.

Its subcellular location is the cytoplasm. In terms of biological role, one of several proteins that assist in the late maturation steps of the functional core of the 30S ribosomal subunit. Associates with free 30S ribosomal subunits (but not with 30S subunits that are part of 70S ribosomes or polysomes). Required for efficient processing of 16S rRNA. May interact with the 5'-terminal helix region of 16S rRNA. The polypeptide is Ribosome-binding factor A (Gluconacetobacter diazotrophicus (strain ATCC 49037 / DSM 5601 / CCUG 37298 / CIP 103539 / LMG 7603 / PAl5)).